Reading from the N-terminus, the 286-residue chain is Release factor glutamine methyltransferase (286 aa).

Residues D148 and N194 each coordinate S-adenosyl-L-methionine. Position 194–197 (194–197 (NPPY)) interacts with substrate.

This sequence belongs to the protein N5-glutamine methyltransferase family. PrmC subfamily.

The enzyme catalyses L-glutaminyl-[peptide chain release factor] + S-adenosyl-L-methionine = N(5)-methyl-L-glutaminyl-[peptide chain release factor] + S-adenosyl-L-homocysteine + H(+). In terms of biological role, methylates the class 1 translation termination release factors RF1/PrfA and RF2/PrfB on the glutamine residue of the universally conserved GGQ motif. The sequence is that of Release factor glutamine methyltransferase from Leptospira interrogans serogroup Icterohaemorrhagiae serovar Lai (strain 56601).